Reading from the N-terminus, the 207-residue chain is Small ribosomal subunit protein uS4 (207 aa).

The S4 RNA-binding domain maps to 97–159; it reads SRLDNVCYRM…AKSQLRIQAA (63 aa).

Belongs to the universal ribosomal protein uS4 family. Part of the 30S ribosomal subunit. Contacts protein S5. The interaction surface between S4 and S5 is involved in control of translational fidelity.

Its function is as follows. One of the primary rRNA binding proteins, it binds directly to 16S rRNA where it nucleates assembly of the body of the 30S subunit. In terms of biological role, with S5 and S12 plays an important role in translational accuracy. The chain is Small ribosomal subunit protein uS4 from Halorhodospira halophila (strain DSM 244 / SL1) (Ectothiorhodospira halophila (strain DSM 244 / SL1)).